A 197-amino-acid polypeptide reads, in one-letter code: dCTP deaminase (197 aa).

Residue Arg105 to Arg110 coordinates dCTP. The Proton donor/acceptor role is filled by Glu133. Positions 166 and 177 each coordinate dCTP. Residues Asn172–Arg197 form a disordered region. Basic and acidic residues predominate over residues Gly176 to Glu187.

The protein belongs to the dCTP deaminase family. As to quaternary structure, homotrimer.

It catalyses the reaction dCTP + H2O + H(+) = dUTP + NH4(+). It functions in the pathway pyrimidine metabolism; dUMP biosynthesis; dUMP from dCTP (dUTP route): step 1/2. Functionally, catalyzes the deamination of dCTP to dUTP. The polypeptide is dCTP deaminase (Thermomicrobium roseum (strain ATCC 27502 / DSM 5159 / P-2)).